We begin with the raw amino-acid sequence, 120 residues long: cAMP-responsive element-binding protein-like 2 (120 aa).

The interval 1–24 is disordered; the sequence is MDDSKVVGGKVKKPGKRGRKPAKI. Residues 10–21 are compositionally biased toward basic residues; it reads KVKKPGKRGRKP. Positions 23–86 constitute a bZIP domain; the sequence is KIDLKAKLER…MAMDQGKIPS (64 aa). The tract at residues 29 to 60 is basic motif; sequence KLERSRQSARECRARKKLRYQYLEELVSSRER. Positions 62-69 are leucine-zipper; sequence ICALREEL. The segment at 93–120 is disordered; sequence TGEEQNKSQQNSSRHTKAGKTDANSNSW.

Belongs to the bZIP family. ATF subfamily. As to quaternary structure, interacts with CREB1; regulates CREB1 phosphorylation, stability and transcriptional activity. Post-translationally, phosphorylated by AMPK.

The protein resides in the nucleus. Its function is as follows. Probable regulator of CREB1 transcriptional activity which is involved in adipose cells differentiation. May also play a regulatory role in the cell cycle. Identification in a chromosomal region frequently deleted in various cancers suggests that it might act as a tumor suppressor. The protein is cAMP-responsive element-binding protein-like 2 (CREBL2) of Homo sapiens (Human).